A 421-amino-acid chain; its full sequence is Transcription factor IIIB 50 kDa subunit (421 aa).

The TFIIB-type zinc finger occupies 2-36 (PGRGRCPDCGSAELVEDSHYSQNQLVCSDCGCVVT). Residues Cys-7, Cys-10, Cys-28, and Cys-31 each coordinate Zn(2+). 2 consecutive repeat copies span residues 72–157 (GLRR…MQIV) and 173–249 (VKTY…SLAR). Residues 108 to 114 (TARLQKK) are interaction with target DNA. The tract at residues 325-357 (ELQGQGQGQGLGDEDVGSSSLELPAGKRPSSPA) is disordered. Ser-355 carries the post-translational modification Phosphoserine. The required for the formation of a ternary complex with DNA and TBP; not required for interaction with TBP in the absence of DNA stretch occupies residues 359 to 365 (LLPPCML). Cys-363 carries the cysteine sulfenic acid (-SOH) modification. The required for interaction with TBP and formation of a ternary complex with DNA and TBP stretch occupies residues 367-421 (PPKRVCPAPPVSMVTGDEDISDSEIEQYLRTPQEVRDFQKAQAARQAAQGTPNPP).

This sequence belongs to the TFIIB family. As to quaternary structure, component of TFIIIB complexes. The TFIIIB complex has two activities, alpha and beta. The TFIIIB-alpha activity complex is composed of TBP, BDP1, and a complex containing both BRF2 and at least four stably associated proteins; this complex inhibits the transcription by pol III via its phosphorylation by CK2; YY1 facilitates the TFIIIB-alpha complex formation. Interacts with TBP; this interaction promotes recruitment of BRF2 to TATA box-containing promoters. Interacts with TBP and the BURE sequence (GC-rich sequence downstream from the TATA box) to form a strong ternary complex which is joined by BDP1; this ternary complex stimulates pol III transcription. Forms a trimeric complex composed of TBP, BRF2 and mini-SNAPc complex (SNAP43, SNAP50, and the N-terminal third of SNAP190) on the promoter. Assembly of the TBP-BRF2 complex is stimulated by SNAP190. Interacts with MAF1 and SNAPC4. In terms of processing, in response to oxidative stress, Cys-363 is reversibly oxidized to cysteine sulfenic acid. Oxidation of Cys-363 impairs formation of a ternary complex with TBP and DNA and down-regulates expression of target genes in response to oxidative stress.

It localises to the nucleus. General activator of RNA polymerase III transcription. Factor exclusively required for RNA polymerase III transcription of genes with promoter elements upstream of the initiation sites. Contributes to the regulation of gene expression; functions as activator in the absence of oxidative stress. Down-regulates expression of target genes in response to oxidative stress. Overexpression protects cells against apoptosis in response to oxidative stress. This chain is Transcription factor IIIB 50 kDa subunit (BRF2), found in Bos taurus (Bovine).